Consider the following 274-residue polypeptide: MAIHLYKTSTPSTRNGAVASQVKSNPRNNLIYGQHHCGKGRNARGIITARHRGGGHKRLYRKIDFRRNAKDIYGRIVTIEYDPNRNAYICLIHYGDGEKRYILHPRGAIIGDTIVSGTEVPIKMGNALPLTDMPLGTAIHNIEITLGKGGQLARAAGAVAKLIAKEGKSATLKLPSGEVRLISKNCSATVGQVGNVGVNQKSLGRAGSKCWLGKRPVVRGVVMNPVDHPHGGGEGRAPIGRKKPVTPWGYPALGRRTRKRKKYSETLILRRRSK.

The disordered stretch occupies residues 225 to 274 (PVDHPHGGGEGRAPIGRKKPVTPWGYPALGRRTRKRKKYSETLILRRRSK).

This sequence belongs to the universal ribosomal protein uL2 family. In terms of assembly, part of the 50S ribosomal subunit.

It is found in the plastid. It localises to the chloroplast. The protein is Large ribosomal subunit protein uL2cz/uL2cy (rpl2-A) of Crucihimalaya wallichii (Rock-cress).